A 380-amino-acid polypeptide reads, in one-letter code: Sterol 24-C-methyltransferase ERG6B (380 aa).

The protein belongs to the class I-like SAM-binding methyltransferase superfamily. Erg6/SMT family.

The catalysed reaction is lanosterol + S-adenosyl-L-methionine = eburicol + S-adenosyl-L-homocysteine + H(+). The protein operates within steroid metabolism; ergosterol biosynthesis. Its function is as follows. Sterol 24-C-methyltransferase; part of the third module of ergosterol biosynthesis pathway that includes the late steps of the pathway. ERG6A and ERG6B methylate lanosterol at C-24 to produce eburicol. The third module or late pathway involves the ergosterol synthesis itself through consecutive reactions that mainly occur in the endoplasmic reticulum (ER) membrane. Firstly, the squalene synthase ERG9 catalyzes the condensation of 2 farnesyl pyrophosphate moieties to form squalene, which is the precursor of all steroids. Squalene synthase is crucial for balancing the incorporation of farnesyl diphosphate (FPP) into sterol and nonsterol isoprene synthesis. Secondly, squalene is converted into lanosterol by the consecutive action of the squalene epoxidase ERG1 and the lanosterol synthase ERG7. Then, the delta(24)-sterol C-methyltransferase ERG6 methylates lanosterol at C-24 to produce eburicol. Eburicol is the substrate of the sterol 14-alpha demethylase encoded by CYP51A, CYP51B and CYP51C, to yield 4,4,24-trimethyl ergosta-8,14,24(28)-trienol. CYP51B encodes the enzyme primarily responsible for sterol 14-alpha-demethylation, and plays an essential role in ascospore formation. CYP51A encodes an additional sterol 14-alpha-demethylase, induced on ergosterol depletion and responsible for the intrinsic variation in azole sensitivity. The third CYP51 isoform, CYP51C, does not encode a sterol 14-alpha-demethylase, but is required for full virulence on host wheat ears. The C-14 reductase ERG24 then reduces the C14=C15 double bond which leads to 4,4-dimethylfecosterol. A sequence of further demethylations at C-4, involving the C-4 demethylation complex containing the C-4 methylsterol oxidases ERG25, the sterol-4-alpha-carboxylate 3-dehydrogenase ERG26 and the 3-keto-steroid reductase ERG27, leads to the production of fecosterol via 4-methylfecosterol. ERG28 has a role as a scaffold to help anchor ERG25, ERG26 and ERG27 to the endoplasmic reticulum. The C-8 sterol isomerase ERG2 then catalyzes the reaction which results in unsaturation at C-7 in the B ring of sterols and thus converts fecosterol to episterol. The sterol-C5-desaturases ERG3A and ERG3BB then catalyze the introduction of a C-5 double bond in the B ring to produce 5-dehydroepisterol. The C-22 sterol desaturases ERG5A and ERG5B further convert 5-dehydroepisterol into ergosta-5,7,22,24(28)-tetraen-3beta-ol by forming the C-22(23) double bond in the sterol side chain. Finally, ergosta-5,7,22,24(28)-tetraen-3beta-ol is substrate of the C-24(28) sterol reductase ERG4 to produce ergosterol. The polypeptide is Sterol 24-C-methyltransferase ERG6B (Gibberella zeae (strain ATCC MYA-4620 / CBS 123657 / FGSC 9075 / NRRL 31084 / PH-1) (Wheat head blight fungus)).